We begin with the raw amino-acid sequence, 211 residues long: MRNIQIALTKGRLEKHVIPLFEQIGIDCSELKNKGRKLVFQSKNTNVSFILVKAVDVATYVEHGVADIGIVGKDILMENEKDIYEMLDLGVGICKFCVASIPTYNPKSYRKKRIATKYPHITSTYFHDKGEDVEIIKIEGSVEIAPLLGLADAIVDIVETGKTLQENGLIVFEEMHSISARMIVNKAALKTKKDEIFSIVNMMEQEILSGK.

It belongs to the ATP phosphoribosyltransferase family. Short subfamily. As to quaternary structure, heteromultimer composed of HisG and HisZ subunits.

It localises to the cytoplasm. The enzyme catalyses 1-(5-phospho-beta-D-ribosyl)-ATP + diphosphate = 5-phospho-alpha-D-ribose 1-diphosphate + ATP. It participates in amino-acid biosynthesis; L-histidine biosynthesis; L-histidine from 5-phospho-alpha-D-ribose 1-diphosphate: step 1/9. Catalyzes the condensation of ATP and 5-phosphoribose 1-diphosphate to form N'-(5'-phosphoribosyl)-ATP (PR-ATP). Has a crucial role in the pathway because the rate of histidine biosynthesis seems to be controlled primarily by regulation of HisG enzymatic activity. In Bacillus cereus (strain G9842), this protein is ATP phosphoribosyltransferase.